A 232-amino-acid chain; its full sequence is Phosphatidylserine decarboxylase proenzyme (232 aa).

Residue Ser-190 is the Schiff-base intermediate with substrate; via pyruvic acid of the active site. Ser-190 bears the Pyruvic acid (Ser); by autocatalysis mark.

Belongs to the phosphatidylserine decarboxylase family. PSD-A subfamily. Heterodimer of a large membrane-associated beta subunit and a small pyruvoyl-containing alpha subunit. Pyruvate is required as a cofactor. In terms of processing, is synthesized initially as an inactive proenzyme. Formation of the active enzyme involves a self-maturation process in which the active site pyruvoyl group is generated from an internal serine residue via an autocatalytic post-translational modification. Two non-identical subunits are generated from the proenzyme in this reaction, and the pyruvate is formed at the N-terminus of the alpha chain, which is derived from the carboxyl end of the proenzyme. The post-translation cleavage follows an unusual pathway, termed non-hydrolytic serinolysis, in which the side chain hydroxyl group of the serine supplies its oxygen atom to form the C-terminus of the beta chain, while the remainder of the serine residue undergoes an oxidative deamination to produce ammonia and the pyruvoyl prosthetic group on the alpha chain.

Its subcellular location is the cell membrane. The catalysed reaction is a 1,2-diacyl-sn-glycero-3-phospho-L-serine + H(+) = a 1,2-diacyl-sn-glycero-3-phosphoethanolamine + CO2. It participates in phospholipid metabolism; phosphatidylethanolamine biosynthesis; phosphatidylethanolamine from CDP-diacylglycerol: step 2/2. Functionally, catalyzes the formation of phosphatidylethanolamine (PtdEtn) from phosphatidylserine (PtdSer). In Agrobacterium fabrum (strain C58 / ATCC 33970) (Agrobacterium tumefaciens (strain C58)), this protein is Phosphatidylserine decarboxylase proenzyme.